A 194-amino-acid chain; its full sequence is Protein DROOPING LEAF (194 aa).

The C4-type zinc finger occupies 15-42 (CTYCNTVLAVGVPCKRLMDTVTVKCGHC). The tract at residues 83–103 (LVSPTSNEGSPRAPFVVKPPE) is disordered.

Belongs to the YABBY family.

It is found in the nucleus. Functionally, regulates carpel specification in flower development. Severe or intermediate mutation in DL causes complete or partial homeotic conversion of carpels into stamens without affecting the identities of other floral organs. Interacts antagonistically with class B genes and controls floral meristem determinacy. Regulates midrib formation in leaves probably by inducing cell proliferation in the central region of the leaf. This chain is Protein DROOPING LEAF (DL), found in Oryza sativa subsp. japonica (Rice).